The sequence spans 489 residues: Glutamate--tRNA ligase (489 aa).

A 'HIGH' region motif is present at residues 12 to 22 (PSPTGIPHVGM). Residues 256-260 (KLSKR) carry the 'KMSKS' region motif. K259 is an ATP binding site.

The protein belongs to the class-I aminoacyl-tRNA synthetase family. Glutamate--tRNA ligase type 1 subfamily. Monomer.

It localises to the cytoplasm. It catalyses the reaction tRNA(Glu) + L-glutamate + ATP = L-glutamyl-tRNA(Glu) + AMP + diphosphate. Functionally, catalyzes the attachment of glutamate to tRNA(Glu) in a two-step reaction: glutamate is first activated by ATP to form Glu-AMP and then transferred to the acceptor end of tRNA(Glu). The polypeptide is Glutamate--tRNA ligase (Mycobacterium marinum (strain ATCC BAA-535 / M)).